Reading from the N-terminus, the 209-residue chain is Uracil phosphoribosyltransferase (209 aa).

Residues arginine 79, arginine 104, and aspartate 131–serine 139 each bind 5-phospho-alpha-D-ribose 1-diphosphate. Uracil is bound by residues isoleucine 194 and glycine 199–alanine 201. Aspartate 200 is a 5-phospho-alpha-D-ribose 1-diphosphate binding site.

The protein belongs to the UPRTase family. It depends on Mg(2+) as a cofactor.

The catalysed reaction is UMP + diphosphate = 5-phospho-alpha-D-ribose 1-diphosphate + uracil. It participates in pyrimidine metabolism; UMP biosynthesis via salvage pathway; UMP from uracil: step 1/1. Its activity is regulated as follows. Allosterically activated by GTP. Catalyzes the conversion of uracil and 5-phospho-alpha-D-ribose 1-diphosphate (PRPP) to UMP and diphosphate. In Rhizobium leguminosarum bv. trifolii (strain WSM2304), this protein is Uracil phosphoribosyltransferase.